Reading from the N-terminus, the 144-residue chain is Peptide methionine sulfoxide reductase B7 (144 aa).

A MsrB domain is found at 19–140; that stretch reads DEEWRAVLSP…NSVSLKFSSA (122 aa). 4 residues coordinate Zn(2+): Cys58, Cys61, Cys104, and Cys107. Residues Cys76 and Cys129 are joined by a disulfide bond. The active-site Nucleophile is the Cys129.

This sequence belongs to the MsrB Met sulfoxide reductase family. It depends on Zn(2+) as a cofactor.

Its subcellular location is the cytoplasm. The protein localises to the cytosol. The enzyme catalyses L-methionyl-[protein] + [thioredoxin]-disulfide + H2O = L-methionyl-(R)-S-oxide-[protein] + [thioredoxin]-dithiol. Its function is as follows. Catalyzes the reduction of methionine sulfoxide (MetSO) to methionine in proteins. Plays a protective role against oxidative stress by restoring activity to proteins that have been inactivated by methionine oxidation. MSRB family specifically reduces the MetSO R-enantiomer. The chain is Peptide methionine sulfoxide reductase B7 (MSRB7) from Arabidopsis thaliana (Mouse-ear cress).